The following is a 267-amino-acid chain: Undecaprenyl-diphosphatase (267 aa).

A run of 8 helical transmembrane segments spans residues 5 to 25, 45 to 65, 82 to 102, 108 to 128, 143 to 163, 183 to 203, 213 to 233, and 243 to 263; these read TIVA…PVSS, FEVL…AGRL, ILAV…AHRI, FETP…LLFV, FPLP…IPGV, AAEF…VYDL, AATG…VVVV, and YGYG…LLAL.

It belongs to the UppP family.

The protein localises to the cell inner membrane. It catalyses the reaction di-trans,octa-cis-undecaprenyl diphosphate + H2O = di-trans,octa-cis-undecaprenyl phosphate + phosphate + H(+). In terms of biological role, catalyzes the dephosphorylation of undecaprenyl diphosphate (UPP). Confers resistance to bacitracin. The sequence is that of Undecaprenyl-diphosphatase from Paracoccus denitrificans (strain Pd 1222).